The following is a 117-amino-acid chain: Large ribosomal subunit protein uL18 (117 aa).

It belongs to the universal ribosomal protein uL18 family. As to quaternary structure, part of the 50S ribosomal subunit; part of the 5S rRNA/L5/L18/L25 subcomplex. Contacts the 5S and 23S rRNAs.

Its function is as follows. This is one of the proteins that bind and probably mediate the attachment of the 5S RNA into the large ribosomal subunit, where it forms part of the central protuberance. This Klebsiella pneumoniae subsp. pneumoniae (strain ATCC 700721 / MGH 78578) protein is Large ribosomal subunit protein uL18.